Consider the following 89-residue polypeptide: Large ribosomal subunit protein bL28 (89 aa).

It belongs to the bacterial ribosomal protein bL28 family.

In Chlamydia trachomatis serovar A (strain ATCC VR-571B / DSM 19440 / HAR-13), this protein is Large ribosomal subunit protein bL28.